The following is a 450-amino-acid chain: Tubulin alpha chain (450 aa).

Residues Gln11, Glu71, Ser140, Gly144, Thr145, Thr179, Asn206, and Asn228 each contribute to the GTP site. Residue Glu71 participates in Mg(2+) binding. Glu254 is a catalytic residue.

Belongs to the tubulin family. In terms of assembly, dimer of alpha and beta chains. A typical microtubule is a hollow water-filled tube with an outer diameter of 25 nm and an inner diameter of 15 nM. Alpha-beta heterodimers associate head-to-tail to form protofilaments running lengthwise along the microtubule wall with the beta-tubulin subunit facing the microtubule plus end conferring a structural polarity. Microtubules usually have 13 protofilaments but different protofilament numbers can be found in some organisms and specialized cells. Mg(2+) is required as a cofactor.

It is found in the cytoplasm. It localises to the cytoskeleton. The enzyme catalyses GTP + H2O = GDP + phosphate + H(+). In terms of biological role, tubulin is the major constituent of microtubules, a cylinder consisting of laterally associated linear protofilaments composed of alpha- and beta-tubulin heterodimers. Microtubules grow by the addition of GTP-tubulin dimers to the microtubule end, where a stabilizing cap forms. Below the cap, tubulin dimers are in GDP-bound state, owing to GTPase activity of alpha-tubulin. In Zymoseptoria tritici (Speckled leaf blotch fungus), this protein is Tubulin alpha chain.